We begin with the raw amino-acid sequence, 380 residues long: Succinate--CoA ligase [ADP-forming] subunit beta 2 (380 aa).

The ATP-grasp domain maps to 9–235 (KQIFSKHGIR…YTEADQMERI (227 aa)). Residues Lys45, 52-54 (GRG), Glu91, Ile94, and Glu99 contribute to the ATP site. Mg(2+)-binding residues include Asn191 and Asp204. Substrate contacts are provided by residues Asn255 and 312–314 (GIT).

This sequence belongs to the succinate/malate CoA ligase beta subunit family. In terms of assembly, heterotetramer of two alpha and two beta subunits. It depends on Mg(2+) as a cofactor.

The catalysed reaction is succinate + ATP + CoA = succinyl-CoA + ADP + phosphate. The enzyme catalyses GTP + succinate + CoA = succinyl-CoA + GDP + phosphate. It participates in carbohydrate metabolism; tricarboxylic acid cycle; succinate from succinyl-CoA (ligase route): step 1/1. Succinyl-CoA synthetase functions in the citric acid cycle (TCA), coupling the hydrolysis of succinyl-CoA to the synthesis of either ATP or GTP and thus represents the only step of substrate-level phosphorylation in the TCA. The beta subunit provides nucleotide specificity of the enzyme and binds the substrate succinate, while the binding sites for coenzyme A and phosphate are found in the alpha subunit. This Archaeoglobus fulgidus (strain ATCC 49558 / DSM 4304 / JCM 9628 / NBRC 100126 / VC-16) protein is Succinate--CoA ligase [ADP-forming] subunit beta 2.